The following is a 178-amino-acid chain: Large ribosomal subunit protein uL6 (178 aa).

Belongs to the universal ribosomal protein uL6 family. As to quaternary structure, part of the 50S ribosomal subunit.

In terms of biological role, this protein binds to the 23S rRNA, and is important in its secondary structure. It is located near the subunit interface in the base of the L7/L12 stalk, and near the tRNA binding site of the peptidyltransferase center. This chain is Large ribosomal subunit protein uL6, found in Streptococcus agalactiae serotype V (strain ATCC BAA-611 / 2603 V/R).